A 326-amino-acid chain; its full sequence is tRNA U34 carboxymethyltransferase (326 aa).

Carboxy-S-adenosyl-L-methionine is bound by residues lysine 95, tryptophan 109, lysine 114, glycine 134, 184–185 (VE), tyrosine 204, and arginine 319.

Belongs to the class I-like SAM-binding methyltransferase superfamily. CmoB family.

The enzyme catalyses carboxy-S-adenosyl-L-methionine + 5-hydroxyuridine(34) in tRNA = 5-carboxymethoxyuridine(34) in tRNA + S-adenosyl-L-homocysteine + H(+). In terms of biological role, catalyzes carboxymethyl transfer from carboxy-S-adenosyl-L-methionine (Cx-SAM) to 5-hydroxyuridine (ho5U) to form 5-carboxymethoxyuridine (cmo5U) at position 34 in tRNAs. The chain is tRNA U34 carboxymethyltransferase from Trichodesmium erythraeum (strain IMS101).